A 2090-amino-acid polypeptide reads, in one-letter code: Nuclear pore complex protein Nup205 (2090 aa).

It belongs to the NUP186/NUP192/NUP205 family. Part of the nuclear pore complex (NPC).

It localises to the nucleus. The protein resides in the nuclear pore complex. In terms of biological role, plays a role in the nuclear pore complex (NPC) assembly and maintenance, but with limited role in NPC permeability. Required for specific nuclear import pathways such as Mad import. The sequence is that of Nuclear pore complex protein Nup205 from Drosophila melanogaster (Fruit fly).